A 230-amino-acid chain; its full sequence is Sugar fermentation stimulation protein homolog (230 aa).

It belongs to the SfsA family.

This is Sugar fermentation stimulation protein homolog from Clostridium botulinum (strain Alaska E43 / Type E3).